A 132-amino-acid chain; its full sequence is Capsid protein (132 aa).

This sequence belongs to the Leviviricetes capsid protein family. Homodimer. The capsid protein dimer binds to the viral RNA via an operator hairpin, but also many other RNA sequences in the viral genome.

It is found in the virion. Capsid protein self-assembles to form an icosahedral capsid with a T=3 symmetry, about 26 nm in diameter, and consisting of 89 capsid proteins dimers (178 capsid proteins). Involved in viral genome encapsidation through the interaction between a capsid protein dimer and the multiple packaging signals present in the RNA genome. Binding of the capsid proteins to the viral RNA induces a conformational change required for efficient T=3 shell formation. The capsid also contains 1 copy of the A2 maturation protein. Its function is as follows. Acts as a translational repressor of viral replicase synthesis late in infection. This latter function is the result of capsid protein interaction with an RNA hairpin which contains the replicase ribosome-binding site. In Enterobacteria phage SP (Bacteriophage SP), this protein is Capsid protein.